A 565-amino-acid polypeptide reads, in one-letter code: NAD-dependent malic enzyme (565 aa).

The Proton donor role is filled by Y103. K177 (proton acceptor) is an active-site residue. Residues E248, D249, and D272 each contribute to the a divalent metal cation site. Residues D272 and N419 each coordinate NAD(+). A Phosphoserine modification is found at S445.

The protein belongs to the malic enzymes family. Mg(2+) is required as a cofactor. Requires Mn(2+) as cofactor.

It carries out the reaction (S)-malate + NAD(+) = pyruvate + CO2 + NADH. The catalysed reaction is oxaloacetate + H(+) = pyruvate + CO2. This chain is NAD-dependent malic enzyme (mae2), found in Schizosaccharomyces pombe (strain 972 / ATCC 24843) (Fission yeast).